The sequence spans 507 residues: RNA-splicing ligase RtcB homolog (507 aa).

Aspartate 121, cysteine 124, histidine 229, histidine 261, and histidine 355 together coordinate Mn(2+). 228–232 is a binding site for GMP; it reads NHYGE. GMP-binding positions include 355 to 356, 404 to 407, serine 411, 430 to 433, and lysine 506; these read HN, GGTM, and HGSG. Catalysis depends on histidine 430, which acts as the GMP-histidine intermediate.

This sequence belongs to the RtcB family. As to quaternary structure, catalytic component of the tRNA-splicing ligase complex. Mn(2+) is required as a cofactor.

It carries out the reaction a 3'-end 3'-phospho-ribonucleotide-RNA + a 5'-end dephospho-ribonucleoside-RNA + GTP = a ribonucleotidyl-ribonucleotide-RNA + GMP + diphosphate. It catalyses the reaction a 3'-end 2',3'-cyclophospho-ribonucleotide-RNA + a 5'-end dephospho-ribonucleoside-RNA + GTP + H2O = a ribonucleotidyl-ribonucleotide-RNA + GMP + diphosphate + H(+). Functionally, catalytic subunit of the tRNA-splicing ligase complex that acts by directly joining spliced tRNA halves to mature-sized tRNAs by incorporating the precursor-derived splice junction phosphate into the mature tRNA as a canonical 3',5'-phosphodiester. May act as an RNA ligase with broad substrate specificity, and may function toward other RNAs. The sequence is that of RNA-splicing ligase RtcB homolog from Theileria parva (East coast fever infection agent).